The primary structure comprises 140 residues: Nucleoside diphosphate kinase (140 aa).

Residues lysine 11, phenylalanine 59, arginine 87, threonine 93, arginine 104, and asparagine 114 each contribute to the ATP site. Catalysis depends on histidine 117, which acts as the Pros-phosphohistidine intermediate.

It belongs to the NDK family. As to quaternary structure, homotetramer. It depends on Mg(2+) as a cofactor.

The protein resides in the cytoplasm. The enzyme catalyses a 2'-deoxyribonucleoside 5'-diphosphate + ATP = a 2'-deoxyribonucleoside 5'-triphosphate + ADP. The catalysed reaction is a ribonucleoside 5'-diphosphate + ATP = a ribonucleoside 5'-triphosphate + ADP. Major role in the synthesis of nucleoside triphosphates other than ATP. The ATP gamma phosphate is transferred to the NDP beta phosphate via a ping-pong mechanism, using a phosphorylated active-site intermediate. This is Nucleoside diphosphate kinase from Cereibacter sphaeroides (strain ATCC 17025 / ATH 2.4.3) (Rhodobacter sphaeroides).